The chain runs to 253 residues: 5-oxoprolinase subunit A (253 aa).

It belongs to the LamB/PxpA family. In terms of assembly, forms a complex composed of PxpA, PxpB and PxpC.

The enzyme catalyses 5-oxo-L-proline + ATP + 2 H2O = L-glutamate + ADP + phosphate + H(+). Functionally, catalyzes the cleavage of 5-oxoproline to form L-glutamate coupled to the hydrolysis of ATP to ADP and inorganic phosphate. This Bacillus cereus (strain ATCC 14579 / DSM 31 / CCUG 7414 / JCM 2152 / NBRC 15305 / NCIMB 9373 / NCTC 2599 / NRRL B-3711) protein is 5-oxoprolinase subunit A.